Here is a 2481-residue protein sequence, read N- to C-terminus: Serine/threonine-protein kinase TOR (2481 aa).

Residues 1–31 form a disordered region; that stretch reads MSTSSQSFVAGRPASMASPSQSHRFCGPSAT. HEAT repeat units lie at residues 205–242, 292–329, 373–410, 434–471, 569–607, 608–645, 737–775, and 781–819; these read VHVPEFVDAIWVALRDPQLQVRERAVEALRACLRVIEK, SRYREVAEIVLRYLEHRDRLVRLSITSLLPRIAHFLRD, HYLPTIMSHLRDAIAPRKGRPLLEAVACVGNIAKAMGS, DALDQITISIPSLLPTVQDRLLDCISLVLSKSHYSQAK, RLVEEIVEKLLRTAVADADVTVRKSIFVALFGNQCFDDY, LAQADSLTAIFASLNDEDLDVREYAISVAGRLSEKNPA, QYIPELMPLIVEALMDGAAVAKREVAVSTLGQVVQSTGY, and KEYPLLLGLLLKLLKGDLVWSTRREVLKVLGIMGALDPH. The segment at 823 to 847 is disordered; it reads RNQQSLSGSHGEVPRGTGDSGQPIP. HEAT repeat units follow at residues 866 to 904, 908 to 945, 952 to 992, 996 to 1036, 1037 to 1075, and 1077 to 1114; these read YYSTVAINSLMRILRDASLLSYHKRVVRSLMIIFKSMGL, PYLPKVLPELFHTVRTSDENLKDFITWGLGTLVSIVRQ, PELL…ALND, TYLP…GTLD, EHMHLLLPALIRLFKVDAPVAIRRDAIKTLTRVIPCVQV, and GHISALVHHLKLVLDGKNDELRKDAVDALCCLAHALGE. The segment at 1179–1204 is disordered; that stretch reads DPFEEGTDRNHQVNDGRLRTAGEASQ. Residues 1184–1198 show a composition bias toward basic and acidic residues; that stretch reads GTDRNHQVNDGRLRT. The FAT domain occupies 1309–1887; the sequence is LLGALAEKCR…MYPLLVACKS (579 aa). 2 short sequence motifs (nuclear localization signal) span residues 1505-1512 and 2075-2080; these read VRRAKYDE and KQRPRK. The PI3K/PI4K catalytic domain maps to 2065-2378; the sequence is FSRQLVVITS…DEDPADIDLP (314 aa). The tract at residues 2071 to 2077 is G-loop; it reads VITSKQR. Residues 2244–2252 are catalytic loop; sequence GLGDRHPSN. An activation loop region spans residues 2264-2289; the sequence is HIDFGDCFEASMNREKFPEKVPFRLT. Residues 2354–2384 form a disordered region; the sequence is NNNPNAPADVEPDEEDEDPADIDLPQPQRST. The span at 2363–2374 shows a compositional bias: acidic residues; that stretch reads VEPDEEDEDPAD. Phosphoserine is present on S2424. Residues 2449-2481 form the FATC domain; it reads HGLSVKVQVQKLINQATSHENLCQNYVGWCPFW.

This sequence belongs to the PI3/PI4-kinase family. As to quaternary structure, interacts with RAPTOR1 and itself. Interacts with FKBP12 in a rapamycin-dependent manner. Binds to LST8-1. Hyperactivated upon interaction with cauliflower mosaic virus (CaMV) Tav protein. Activated by phosphorylation on Ser-2424 triggered by cauliflower mosaic virus P6 and auxin. As to expression, highly expressed in root meristems, shoot apical meristem (SAM) and floral buds.

It is found in the cytoplasm. It localises to the nucleus. The enzyme catalyses L-seryl-[protein] + ATP = O-phospho-L-seryl-[protein] + ADP + H(+). It carries out the reaction L-threonyl-[protein] + ATP = O-phospho-L-threonyl-[protein] + ADP + H(+). Almost insensitive to rapamycin. Strongly repressed by specific active site inhibitors (asTORis) such as AZD-8055, TORIN2 and WYE-132, and, to a lesser extent, by KU63794, WYE-354 and TORIN1, leading to impaired photoautotrophic growth and abnormally early meristematic cells differentiation. Repression by TORIN1 leads to impaired responses to auxin, including gravitropism. Combined treatment with rapamycin and active-site inhibitors (e.g. Torin1 and AZD-8055) results in synergistic inhibition of activity and plant growth. Inhibition by KU63794 leads to reduced auxin content in root tips. AZD-8055 treatment reduces abscisic acid (ABA) levels. In addition, inhibition by AZD-8055 leads to a strong reduction of watermelon mosaic virus (WMV) infection. In terms of biological role, essential cell growth regulator that controls development from early embryo to seed production. Controls plant growth in environmental stress conditions. Acts through the phosphorylation of downstream effectors that are recruited by the binding partner RAPTOR. Acts by activating transcription, protein synthesis and ribosome biogenesis, and inhibiting mRNA degradation and autophagy. Can phosphorylate TAP46, a regulatory subunit of protein phosphatase 2A that modulates cell growth and survival. Involved in modulating the transition from heterotrophic to photoautotrophic growth by regulating the expression of chloroplast- and photosynthesis-associated genes. Essential for auxin signaling transduction, probably acting in polysomes to maintain the active ATPK1/S6K1 (and thus TIF3H1/eIF3h) phosphorylation status that is critical for translation reinitiation (e.g. uORF-mRNAs loading). Promotes abscisic acid (ABA) biosynthesis. Involved in the regulation of sugar-mediated (e.g. glucose and sucrose) glycolysis- and mitochondrial bioenergetics-dependent root growth promotion. Required for sugar (e.g. glucose) promotion of hypocotyl elongation in the dark, by activating the brassinosteroid pathway and stabilizing BZR1. The regulation of BZR1 degradation is dependent on autophagy. Regulates the expression, phosphorylation and ribosome association of MRFs (e.g. MRF1, MRF3 and MRF4), especially under energy-deficient conditions. Functionally, (Microbial infection) Binding to cauliflower mosaic virus (CaMV) Tav protein is critical for both translation reinitiation and viral fitness. When activated by CaMV P6, promotes CaMV translation by inhibiting cellular autophagy and suppressing both silencing and innate immunity, thus conferring sensitivity to P.syringae. Its function is as follows. (Microbial infection) Required during infection by some potyvirus such as Watermelon mosaic virus (WMV) but not for turnip mosaic virus (TuMV). The polypeptide is Serine/threonine-protein kinase TOR (Arabidopsis thaliana (Mouse-ear cress)).